Reading from the N-terminus, the 113-residue chain is Large ribosomal subunit protein eL31A (113 aa).

Belongs to the eukaryotic ribosomal protein eL31 family. Component of the large ribosomal subunit (LSU). Mature yeast ribosomes consist of a small (40S) and a large (60S) subunit. The 40S small subunit contains 1 molecule of ribosomal RNA (18S rRNA) and 33 different proteins (encoded by 57 genes). The large 60S subunit contains 3 rRNA molecules (25S, 5.8S and 5S rRNA) and 46 different proteins (encoded by 81 genes).

The protein resides in the cytoplasm. In terms of biological role, component of the ribosome, a large ribonucleoprotein complex responsible for the synthesis of proteins in the cell. The small ribosomal subunit (SSU) binds messenger RNAs (mRNAs) and translates the encoded message by selecting cognate aminoacyl-transfer RNA (tRNA) molecules. The large subunit (LSU) contains the ribosomal catalytic site termed the peptidyl transferase center (PTC), which catalyzes the formation of peptide bonds, thereby polymerizing the amino acids delivered by tRNAs into a polypeptide chain. The nascent polypeptides leave the ribosome through a tunnel in the LSU and interact with protein factors that function in enzymatic processing, targeting, and the membrane insertion of nascent chains at the exit of the ribosomal tunnel. In Saccharomyces cerevisiae (strain ATCC 204508 / S288c) (Baker's yeast), this protein is Large ribosomal subunit protein eL31A.